Reading from the N-terminus, the 426-residue chain is MALIDAIHAREILDSRGNPTVEVEVLLSDGQIGRAAVPSGASTGEHEAVELRDGDKGRYLGKGVQKAVDAVIDEISPALIGFDATDQRSIDQAMIDLDGTPNKGKLGANAILGVSLAVANAAAASADLPLYKYLGGPNAHVLPVPLMNILNGGSHADSDVDIQEFMIAPIGAETFSEGLRWGVEVYHNLKAVLQEKGLSTGLGDEGGFAPNLPSNRAALDLIQEAIKNAGYTPGTDIALALDVASSEFYKEGAYQFEGKALSATEMSAYYAELVADYPLVSIEDPLDENDWEGWKTLTDTIGDKVQLVGDDLFVTNPVRLQQGIETATANSLLVKVNQIGSLTETLDAVSLAQRSGYTTITSHRSGETEDTTIADIAVATNAGQIKTGAPARSERVAKYNQLLRIEEELDDAARYAGRSAFPRFKG.

Q163 contacts (2R)-2-phosphoglycerate. E205 acts as the Proton donor in catalysis. Mg(2+) is bound by residues D242, E283, and D310. The (2R)-2-phosphoglycerate site is built by K335, R364, S365, and K386. K335 acts as the Proton acceptor in catalysis.

Belongs to the enolase family. Mg(2+) is required as a cofactor.

The protein localises to the cytoplasm. The protein resides in the secreted. It is found in the cell surface. The enzyme catalyses (2R)-2-phosphoglycerate = phosphoenolpyruvate + H2O. It participates in carbohydrate degradation; glycolysis; pyruvate from D-glyceraldehyde 3-phosphate: step 4/5. Catalyzes the reversible conversion of 2-phosphoglycerate (2-PG) into phosphoenolpyruvate (PEP). It is essential for the degradation of carbohydrates via glycolysis. The chain is Enolase from Paenarthrobacter aurescens (strain TC1).